The sequence spans 344 residues: AA9 family lytic polysaccharide monooxygenase cel61A (344 aa).

The N-terminal stretch at 1–21 (MIQKLSNLLVTALAVATGVVG) is a signal peptide. A Cu(2+)-binding site is contributed by histidine 22. 2 disulfides stabilise this stretch: cysteine 77–cysteine 198 and cysteine 118–cysteine 122. The N-linked (GlcNAc...) asparagine glycan is linked to asparagine 80. Histidine 107 provides a ligand contact to Cu(2+). Asparagine 158 carries an N-linked (GlcNAc...) asparagine glycan. O2 is bound by residues histidine 184 and glutamine 193. Tyrosine 195 provides a ligand contact to Cu(2+). A disordered region spans residues 262-310 (ATASATVPGGGSGPTSRTTTTARTTQASSRPSSTPPATTSAPAGGPTQT). A compositionally biased stretch (low complexity) spans 275 to 310 (PTSRTTTTARTTQASSRPSSTPPATTSAPAGGPTQT). Residues 307 to 343 (PTQTLYGQCGGSGYSGPTRCAPPATCSTLNPYYAQCL) enclose the CBM1 domain.

The protein belongs to the polysaccharide monooxygenase AA9 family. It depends on Cu(2+) as a cofactor.

It localises to the secreted. It catalyses the reaction [(1-&gt;4)-beta-D-glucosyl]n+m + reduced acceptor + O2 = 4-dehydro-beta-D-glucosyl-[(1-&gt;4)-beta-D-glucosyl]n-1 + [(1-&gt;4)-beta-D-glucosyl]m + acceptor + H2O.. Functionally, lytic polysaccharide monooxygenase (LPMO) that depolymerizes crystalline and amorphous polysaccharides via the oxidation of scissile alpha- or beta-(1-4)-glycosidic bonds, yielding C1 or C4 oxidation products. Catalysis by LPMOs requires the reduction of the active-site copper from Cu(II) to Cu(I) by a reducing agent and H(2)O(2) or O(2) as a cosubstrate. Shows activity on beta-glucan and amorphous cellulose. Does not show beta-1-3-glucanase, beta-1,6-glucanase, mannanase, xylanase, beta-1,3-galactosidase, amylase, pectinase, nor chitinase activities. The sequence is that of AA9 family lytic polysaccharide monooxygenase cel61A from Hypocrea jecorina (Trichoderma reesei).